A 339-amino-acid polypeptide reads, in one-letter code: Glyceraldehyde-3-phosphate dehydrogenase (339 aa).

NAD(+)-binding positions include 12-13 (RI), aspartate 39, arginine 84, and serine 127. D-glyceraldehyde 3-phosphate contacts are provided by residues 157 to 159 (SCT), threonine 188, arginine 203, 216 to 217 (TG), and arginine 239. The active-site Nucleophile is cysteine 158. Asparagine 320 provides a ligand contact to NAD(+).

It belongs to the glyceraldehyde-3-phosphate dehydrogenase family. In terms of assembly, homotetramer.

It is found in the cytoplasm. The catalysed reaction is D-glyceraldehyde 3-phosphate + phosphate + NAD(+) = (2R)-3-phospho-glyceroyl phosphate + NADH + H(+). It participates in carbohydrate degradation; glycolysis; pyruvate from D-glyceraldehyde 3-phosphate: step 1/5. In terms of biological role, catalyzes the oxidative phosphorylation of glyceraldehyde 3-phosphate (G3P) to 1,3-bisphosphoglycerate (BPG) using the cofactor NAD. The first reaction step involves the formation of a hemiacetal intermediate between G3P and a cysteine residue, and this hemiacetal intermediate is then oxidized to a thioester, with concomitant reduction of NAD to NADH. The reduced NADH is then exchanged with the second NAD, and the thioester is attacked by a nucleophilic inorganic phosphate to produce BPG. This chain is Glyceraldehyde-3-phosphate dehydrogenase (gapA), found in Mycobacterium leprae (strain TN).